Consider the following 495-residue polypeptide: MVAFATEKKQDLNLLSKIASGDGHGENSSYFDGWKAYEENPFHPIDRPDGVIQMGLAENQLCGDLMRKWVLKHPEASICTSEGVNQFSDIAIFQDYHGLPEFRQAVAKFMEKTRNNKVKFDPDRIVMSGGATGAHETVAFCLANPGDGFLVPTPYYPGFDRDLRWRTGVNLVPVTCHSSNGFKITVEALEAAYENARKSNIPVKGLLVTNPSNPLGTTLDRECLKSLVNFTNDKGIHLIADEIYAATTFGQSEFISVAEVIEEIEDCNRDLIHIVYSLSKDMGLPGLRVGIVYSYNDRVVQIARKMSSFGLVSSQTQHLIAKMLSDEEFVDEFIRESKLRLAARHAEITTGLDGLGIGWLKAKAGLFLWMDLRNLLKTATFDSETELWRVIVHQVKLNVSPGGSFHCHEPGWFRVCFANMDHKTMETALERIRVFTSQLEEETKPMAATTMMAKKKKKCWQSNLRLSFSDTRRFDDGFFSPHSPVPPSPLVRAQT.

Substrate is bound by residues glutamate 58 and tyrosine 96. At lysine 280 the chain carries N6-(pyridoxal phosphate)lysine. 3 positions are modified to phosphoserine: serine 480, serine 483, and serine 488.

Belongs to the class-I pyridoxal-phosphate-dependent aminotransferase family. In terms of assembly, homodimer and heterodimer. In vivo, the relevance of heterodimerization with other ACS enzymes is however unsure. Interacts with GRF3. It depends on pyridoxal 5'-phosphate as a cofactor. Phosphorylated on serine residue by MAP kinase (MPK6). In terms of processing, may be processed at its C-terminus. As to expression, expressed in roots and flowers.

The enzyme catalyses S-adenosyl-L-methionine = 1-aminocyclopropane-1-carboxylate + S-methyl-5'-thioadenosine + H(+). Its pathway is alkene biosynthesis; ethylene biosynthesis via S-adenosyl-L-methionine; ethylene from S-adenosyl-L-methionine: step 1/2. Its function is as follows. 1-aminocyclopropane-1-carboxylate synthase (ACS) enzymes catalyze the conversion of S-adenosyl-L-methionine (SAM) into 1-aminocyclopropane-1-carboxylate (ACC), a direct precursor of ethylene. Involved in bacterial flagellin-induced ethylene production. The polypeptide is 1-aminocyclopropane-1-carboxylate synthase 6 (ACS6) (Arabidopsis thaliana (Mouse-ear cress)).